The sequence spans 299 residues: Kynurenine formamidase-like hydrolase fscH (299 aa).

The HGGXW signature appears at 48–52 (HGGAW). A disordered region spans residues 90-110 (SPRTPSQPVPSGGHVGGEQQA). The Nucleophile role is filled by serine 142.

The protein belongs to the kynurenine formamidase family.

It participates in secondary metabolite biosynthesis. Kynurenine formamidase-like hydrolase; part of the fragmented gene cluster that mediates the biosynthesis of fusarochromene, a tryptophan-derived metabolite closely related to a group of mycotoxins including fusarochromanone. Within the pathway, fscH converts the product of fscD into 4-hydroxykyrunenine. The first step of the pathway is the epimerization of L-tryptophan to D-tryptophan in the presence of the NRPS-like tryptophan epimerase fscC. D-tryptophan is subsequently hydroxylated by the tryptophan 6-hydroxylase fscE to yield 6-hydroxytryptophan. The pyrrole ring undergoes cleavaged by the tryptophan 2,3-dioxygenase fscD and is finally converted to 4-hydroxykyrunenine by the hydrolase fscH. The NRPS-like oxidoreductase fscA reduces the carboxyl group to primary alcohol and the DMATS-type prenyltransferase fscG performs prenylation, followed by the formation of a chromene ring catalyzed by the oxidoreductase fscI, which leads to desacetylfusarochromene. Epoxidation by fscF and rearrangement reactions of chromene double bonds convert compound desacetylfusarochromene to fusarochromanones. Although specific acetyltransferases were not found near the fsc gene cluster, several predicted enzymes containing the N-acetyltransferase superfamily domain are present in the genome of F.equiseti. These predicted enzymes may have the potential to convert desacetylfusarochromene to fusarochromene. The sequence is that of Kynurenine formamidase-like hydrolase fscH from Fusarium equiseti (Fusarium scirpi).